The primary structure comprises 640 residues: (Z)-beta-ocimene synthase TPS13PK, chloroplastic (640 aa).

The transit peptide at 1–95 (MAALVSTVSS…PFKDEAYVKR (95 aa)) directs the protein to the chloroplast. A disordered region spans residues 50 to 69 (MSTNNNNNNNQKNSSRRSAN). Polar residues predominate over residues 60–69 (QKNSSRRSAN). (2E)-geranyl diphosphate contacts are provided by R334, D371, D375, R515, and D518. Positions 371 and 375 each coordinate Mg(2+). The DDXXD motif motif lies at 371-375 (DDIYD). 3 residues coordinate Mg(2+): D518, T522, and E526.

This sequence belongs to the terpene synthase family. In terms of assembly, monomer. Requires Mg(2+) as cofactor.

It is found in the plastid. The protein resides in the chloroplast. It carries out the reaction (2E)-geranyl diphosphate = (Z)-beta-ocimene + diphosphate. It participates in secondary metabolite biosynthesis; terpenoid biosynthesis. In terms of biological role, involved in monoterpene (C10) olefins biosynthesis, constituants of cannabinoids and terpenoids-rich resins. Catalyzes mainly the conversion of (2E)-geranyl diphosphate to (Z)-beta-ocimene. This Cannabis sativa (Hemp) protein is (Z)-beta-ocimene synthase TPS13PK, chloroplastic.